A 154-amino-acid polypeptide reads, in one-letter code: OCIA domain-containing protein 2 (154 aa).

Residues M1–Q22 are disordered. The region spanning M1 to A120 is the OCIA domain. Position 41 is an N6-acetyllysine (K41).

Interacts (via OCIA domain) with OCIAD1/ASRIJ and STAT3.

Its subcellular location is the endosome. It localises to the mitochondrion. The protein localises to the mitochondrion inner membrane. Its function is as follows. Has an essential role in the assembly of mitochondrial respiratory chain complex III. Is also required for STAT3 activation and plays a role in cell migration. The protein is OCIA domain-containing protein 2 (OCIAD2) of Homo sapiens (Human).